Consider the following 342-residue polypeptide: 4-hydroxy-2-oxovalerate aldolase (342 aa).

Residues I5–Q257 form the Pyruvate carboxyltransferase domain. R13–D14 is a binding site for substrate. D14 is a binding site for Mn(2+). Residue H17 is the Proton acceptor of the active site. Residues S167 and H196 each contribute to the substrate site. The Mn(2+) site is built by H196 and H198. Position 287 (Y287) interacts with substrate.

The protein belongs to the 4-hydroxy-2-oxovalerate aldolase family.

The catalysed reaction is (S)-4-hydroxy-2-oxopentanoate = acetaldehyde + pyruvate. The polypeptide is 4-hydroxy-2-oxovalerate aldolase (Acidovorax sp. (strain JS42)).